Consider the following 255-residue polypeptide: Triosephosphate isomerase (255 aa).

Residue N9–K11 participates in substrate binding. H95 acts as the Electrophile in catalysis. E167 acts as the Proton acceptor in catalysis. Residues G173, S212, and G233 to G234 contribute to the substrate site.

This sequence belongs to the triosephosphate isomerase family. Homodimer.

The protein localises to the cytoplasm. It carries out the reaction D-glyceraldehyde 3-phosphate = dihydroxyacetone phosphate. Its pathway is carbohydrate biosynthesis; gluconeogenesis. It functions in the pathway carbohydrate degradation; glycolysis; D-glyceraldehyde 3-phosphate from glycerone phosphate: step 1/1. Functionally, involved in the gluconeogenesis. Catalyzes stereospecifically the conversion of dihydroxyacetone phosphate (DHAP) to D-glyceraldehyde-3-phosphate (G3P). In Sodalis glossinidius (strain morsitans), this protein is Triosephosphate isomerase.